The chain runs to 53 residues: MSHALPALIKMHITKDIGYGLLLGIIPGVWFKYQIGQSIQKREDFYAAYDKRN.

Slime mold cytochrome c oxidase consists of at least seven different polypeptides species, subunits I, II, III, IV, V, VI, and VIIe/s in order of MW.

The protein resides in the mitochondrion inner membrane. The catalysed reaction is 4 Fe(II)-[cytochrome c] + O2 + 8 H(+)(in) = 4 Fe(III)-[cytochrome c] + 2 H2O + 4 H(+)(out). This protein is one of the nuclear-coded polypeptide chains of cytochrome c oxidase, the terminal oxidase in mitochondrial electron transport. In Dictyostelium discoideum (Social amoeba), this protein is Cytochrome c oxidase subunit 7e (cxgE).